A 99-amino-acid chain; its full sequence is Accessory protein p12I (99 aa).

The chain crosses the membrane as a helical span at residues 3 to 23 (FRLLSPLSPLALTALLLFLLP). 2 consecutive short sequence motifs (SH3-binding) follow at residues 4 to 11 (RLLSPLSP) and 33 to 38 (RPPPAP). Residues 48–68 (ILSGLLFLLFLPLFFSLPLLL) traverse the membrane as a helical segment. 2 consecutive short sequence motifs (SH3-binding) follow at residues 70–77 (PSLPITMR) and 88–93 (KAPSQP). Residue K88 forms a Glycyl lysine isopeptide (Lys-Gly) (interchain with G-Cter in ubiquitin); in isolate LAF linkage.

It belongs to the HTLV-1 accessory protein p12I family. In terms of assembly, p12I is a homodimer. Interacts with human CANX, CALR, ATP6V0C, IL2RB, IL2RG. Binds to MHC-I heavy chains HLA-A2, HLA-B7 and HLA-Cw4. In terms of processing, ubiquitinated; a fraction of P12I is degraded via the ubiquitin system.

It localises to the host endoplasmic reticulum membrane. It is found in the host Golgi apparatus. The protein resides in the host cis-Golgi network membrane. Its function is as follows. p12I is a modulator of T-lymphocyte proliferation and immune function and may contribute to establish a persistent infection. Binds and down-modulates cell surface expression of interleukin-2 receptors IL2RB and IL2RG. Also down-modulates cell surface MHC-I molecules by binding to free immature MHC-I heavy chains in the ER and targeting them to the proteasome for degradation. Binding to IL2RB mediates recruitment of JAK1 and JAK3. As a result of this interaction, p12I increases DNA-binding and transcriptional activity of STAT5. This chain is Accessory protein p12I, found in Homo sapiens (Human).